A 255-amino-acid chain; its full sequence is uncharacterized protein (255 aa).

Disordered stretches follow at residues 112 to 145 (CWPGSPLGGTGPPTNRPPRSRAWNRYRSDRPSPG) and 157 to 183 (GLAEHQGGGDGDVERAHAGNHRNPDAQ).

This is an uncharacterized protein from Rhodospirillum rubrum.